Here is a 345-residue protein sequence, read N- to C-terminus: Phosphoribosylformylglycinamidine cyclo-ligase (345 aa).

The protein belongs to the AIR synthase family.

The protein localises to the cytoplasm. The enzyme catalyses 2-formamido-N(1)-(5-O-phospho-beta-D-ribosyl)acetamidine + ATP = 5-amino-1-(5-phospho-beta-D-ribosyl)imidazole + ADP + phosphate + H(+). It functions in the pathway purine metabolism; IMP biosynthesis via de novo pathway; 5-amino-1-(5-phospho-D-ribosyl)imidazole from N(2)-formyl-N(1)-(5-phospho-D-ribosyl)glycinamide: step 2/2. This Enterobacter sp. (strain 638) protein is Phosphoribosylformylglycinamidine cyclo-ligase.